The primary structure comprises 368 residues: Quinolinate synthase (368 aa).

Iminosuccinate-binding residues include His46 and Ser63. Cys110 is a [4Fe-4S] cluster binding site. Residues 141 to 143 (YVN) and Ser162 each bind iminosuccinate. Position 230 (Cys230) interacts with [4Fe-4S] cluster. Residues 256–258 (HPE) and Thr273 each bind iminosuccinate. [4Fe-4S] cluster is bound at residue Cys320.

Belongs to the quinolinate synthase family. Type 3 subfamily. [4Fe-4S] cluster serves as cofactor.

It is found in the cytoplasm. It catalyses the reaction iminosuccinate + dihydroxyacetone phosphate = quinolinate + phosphate + 2 H2O + H(+). It participates in cofactor biosynthesis; NAD(+) biosynthesis; quinolinate from iminoaspartate: step 1/1. Catalyzes the condensation of iminoaspartate with dihydroxyacetone phosphate to form quinolinate. The polypeptide is Quinolinate synthase (Bacillus anthracis (strain A0248)).